Consider the following 543-residue polypeptide: MAELEQLLDESSSAKALVSLREGSLSNTLNEKNNLPKSQTTRGRSSYVSMETPTRSSKRSRLSCEDEERPIASRSPRRSQRVTTMPQKLTNVATPDKRVSQKIGLRLRNLLKLPKAHKWCIYEWFYSNIDRPLFEGDNDFCLCLKESFPNLKTRKLTRVEWGTIRRLMGKPRRCSSAFFAEERMALKQKRQKMRLLQQRKITDMSLCKDLPDEIPLPLVIGTKVTARLRGVHDGLFTGQIDAVDTSAATYRVTFDRNGLGTHTVPDYEVLSNEPHETMPISAFAQKQRPPRFQNFLTPPRGSYTGSTQSILMDNDPLFSQSPWRSKLTGTDGETLGGFPVKFLVQVTRLSKILMIKKEHIKHLKEMNTEAEKLKSYSMPIGLDLQKRYATTVLDLEQLNKDLNKVLHEVQQFCFELAPDQGMQPADQPSELRRRCEEESQDVLRQNNTLASGEPRVQNTELTQLISRLTALLLQIRCLAEGGDLNSFEFKSLTDSLNDIKSSIDDSNLSCFQDNVEIHVAHIQSGLSQLGNLHAFSANNTNRT.

Positions 21–82 (REGSLSNTLN…SRSPRRSQRV (62 aa)) are disordered. A compositionally biased stretch (polar residues) spans 24–55 (SLSNTLNEKNNLPKSQTTRGRSSYVSMETPTR). A coiled-coil region spans residues 355-451 (IKKEHIKHLK…VLRQNNTLAS (97 aa)).

Belongs to the lin-9 family. Component of the DREAM complex.

Its subcellular location is the nucleus. The protein is Protein lin-9 homolog (lin9) of Danio rerio (Zebrafish).